The chain runs to 1353 residues: Patatin-like phospholipase domain-containing protein ZK370.4 (1353 aa).

A helical membrane pass occupies residues isoleucine 12–isoleucine 32. Positions threonine 49 to serine 64 are enriched in low complexity. Disordered stretches follow at residues threonine 49 to phenylalanine 188 and serine 199 to proline 218. Residues serine 91 to serine 123 show a composition bias toward polar residues. Composition is skewed to basic residues over residues arginine 126–tyrosine 138 and proline 170–glutamine 184. Residues leucine 245–arginine 372, phenylalanine 444–arginine 581, and isoleucine 570–tyrosine 692 each bind a nucleoside 3',5'-cyclic phosphate. The PNPLA domain maps to leucine 942–arginine 1108. A GXGXXG motif is present at residues glycine 946–glycine 951. The GXSXG signature appears at glycine 973 to glycine 977. The active-site Nucleophile is serine 975. Aspartate 1095 functions as the Proton acceptor in the catalytic mechanism. The DGA/G motif lies at aspartate 1095 to glycine 1097. 3 disordered regions span residues glutamate 1230–serine 1249, serine 1274–leucine 1293, and tyrosine 1305–serine 1353. Positions glycine 1328 to glycine 1337 are enriched in low complexity.

It belongs to the NTE family.

It localises to the membrane. This chain is Patatin-like phospholipase domain-containing protein ZK370.4, found in Caenorhabditis elegans.